The chain runs to 149 residues: Ribonuclease pancreatic (149 aa).

Positions 1–25 (MGLEKSLMLFPLFVLLLGWVQPSLG) are cleaved as a signal peptide. Residues 30–49 (AQKFQRQHMDPAGSSSNSPT) form a disordered region. Substrate contacts are provided by lysine 32 and arginine 35. Catalysis depends on histidine 37, which acts as the Proton acceptor. 4 disulfides stabilise this stretch: cysteine 51-cysteine 109, cysteine 65-cysteine 120, cysteine 83-cysteine 135, and cysteine 90-cysteine 97. 66–70 (KPVNT) provides a ligand contact to substrate. Asparagine 87 carries N-linked (GlcNAc...) asparagine glycosylation. Lysine 91 lines the substrate pocket. Histidine 144 (proton donor) is an active-site residue.

It belongs to the pancreatic ribonuclease family. Monomer. Interacts with and forms tight 1:1 complexes with RNH1. Dimerization of two such complexes may occur. Interaction with RNH1 inhibits this protein. In terms of tissue distribution, pancreas.

It is found in the secreted. It carries out the reaction an [RNA] containing cytidine + H2O = an [RNA]-3'-cytidine-3'-phosphate + a 5'-hydroxy-ribonucleotide-3'-[RNA].. The catalysed reaction is an [RNA] containing uridine + H2O = an [RNA]-3'-uridine-3'-phosphate + a 5'-hydroxy-ribonucleotide-3'-[RNA].. Endonuclease that catalyzes the cleavage of RNA on the 3' side of pyrimidine nucleotides. Acts on single-stranded and double-stranded RNA. In Mus saxicola (Brown spiny mouse), this protein is Ribonuclease pancreatic (Rnase1).